A 527-amino-acid polypeptide reads, in one-letter code: Anthranilate synthase component 1 1 (527 aa).

Residue Ser-52 participates in L-tryptophan binding. A disordered region spans residues 53-72; it reads AEKTPASDPDGAFTPDTTTE. 298-300 provides a ligand contact to L-tryptophan; that stretch reads PYM. Position 333–334 (333–334) interacts with chorismate; it reads GT. Mg(2+) is bound at residue Glu-360. Chorismate-binding positions include Tyr-448, Arg-468, 486 to 488, and Gly-488; that span reads GAG. Glu-501 contributes to the Mg(2+) binding site.

Belongs to the anthranilate synthase component I family. Tetramer of two components I and two components II. It depends on Mg(2+) as a cofactor.

It carries out the reaction chorismate + L-glutamine = anthranilate + pyruvate + L-glutamate + H(+). It functions in the pathway amino-acid biosynthesis; L-tryptophan biosynthesis; L-tryptophan from chorismate: step 1/5. This is Anthranilate synthase component 1 1 (trpE1) from Halobacterium salinarum (strain ATCC 700922 / JCM 11081 / NRC-1) (Halobacterium halobium).